Consider the following 254-residue polypeptide: MLRILLSNDDGVTAPGIQVLAAALRENYHVQVVAPDRNRSGASNALTLDRSLSVNTLENGDISVLGGTPTDCVYLGVNRLVLPRPEIVVSGINRGPNLGDDVIYSGTVAAAMEGRHLGLPALAISLNGELHYQTAAEITCRLLQMLQTTPLRAGNILNVNVPDLPLEHIKGFRVTRCGSRHAAEEVYSMQDPKGNMLYWLGPPGDKHDAGPETDFAAVEQGYVSITPLQVDLTAYKAQALVRDWLAKAEVDGEC.

Residues Asp9, Asp10, Ser40, and Asn93 each coordinate a divalent metal cation.

It belongs to the SurE nucleotidase family. A divalent metal cation is required as a cofactor.

The protein localises to the cytoplasm. It catalyses the reaction a ribonucleoside 5'-phosphate + H2O = a ribonucleoside + phosphate. The enzyme catalyses a ribonucleoside 3'-phosphate + H2O = a ribonucleoside + phosphate. The catalysed reaction is [phosphate](n) + H2O = [phosphate](n-1) + phosphate + H(+). In terms of biological role, nucleotidase with a broad substrate specificity as it can dephosphorylate various ribo- and deoxyribonucleoside 5'-monophosphates and ribonucleoside 3'-monophosphates with highest affinity to 3'-AMP. Also hydrolyzes polyphosphate (exopolyphosphatase activity) with the preference for short-chain-length substrates (P20-25). Might be involved in the regulation of dNTP and NTP pools, and in the turnover of 3'-mononucleotides produced by numerous intracellular RNases (T1, T2, and F) during the degradation of various RNAs. This Photorhabdus laumondii subsp. laumondii (strain DSM 15139 / CIP 105565 / TT01) (Photorhabdus luminescens subsp. laumondii) protein is 5'/3'-nucleotidase SurE.